Consider the following 160-residue polypeptide: ATP synthase subunit b, chloroplastic (160 aa).

The helical transmembrane segment at 12–31 threads the bilayer; sequence NVINIAILVVILIRFARQVV.

This sequence belongs to the ATPase B chain family. In terms of assembly, F-type ATPases have 2 components, F(1) - the catalytic core - and F(0) - the membrane proton channel. F(1) has five subunits: alpha(3), beta(3), gamma(1), delta(1), epsilon(1). F(0) has four main subunits: a(1), b(1), b'(1) and c(10-14). The alpha and beta chains form an alternating ring which encloses part of the gamma chain. F(1) is attached to F(0) by a central stalk formed by the gamma and epsilon chains, while a peripheral stalk is formed by the delta, b and b' chains.

The protein localises to the plastid. Its subcellular location is the chloroplast thylakoid membrane. In terms of biological role, f(1)F(0) ATP synthase produces ATP from ADP in the presence of a proton or sodium gradient. F-type ATPases consist of two structural domains, F(1) containing the extramembraneous catalytic core and F(0) containing the membrane proton channel, linked together by a central stalk and a peripheral stalk. During catalysis, ATP synthesis in the catalytic domain of F(1) is coupled via a rotary mechanism of the central stalk subunits to proton translocation. Functionally, component of the F(0) channel, it forms part of the peripheral stalk, linking F(1) to F(0). The polypeptide is ATP synthase subunit b, chloroplastic (Cyanidioschyzon merolae (strain NIES-3377 / 10D) (Unicellular red alga)).